We begin with the raw amino-acid sequence, 211 residues long: Imidazole glycerol phosphate synthase subunit HisH (211 aa).

The region spanning 1-211 is the Glutamine amidotransferase type-1 domain; it reads MIGIIDYGMG…VGIATGRGNG (211 aa). Residue Cys79 is the Nucleophile of the active site. Residues His186 and Glu188 contribute to the active site.

Heterodimer of HisH and HisF.

It is found in the cytoplasm. The catalysed reaction is 5-[(5-phospho-1-deoxy-D-ribulos-1-ylimino)methylamino]-1-(5-phospho-beta-D-ribosyl)imidazole-4-carboxamide + L-glutamine = D-erythro-1-(imidazol-4-yl)glycerol 3-phosphate + 5-amino-1-(5-phospho-beta-D-ribosyl)imidazole-4-carboxamide + L-glutamate + H(+). It catalyses the reaction L-glutamine + H2O = L-glutamate + NH4(+). The protein operates within amino-acid biosynthesis; L-histidine biosynthesis; L-histidine from 5-phospho-alpha-D-ribose 1-diphosphate: step 5/9. Its function is as follows. IGPS catalyzes the conversion of PRFAR and glutamine to IGP, AICAR and glutamate. The HisH subunit catalyzes the hydrolysis of glutamine to glutamate and ammonia as part of the synthesis of IGP and AICAR. The resulting ammonia molecule is channeled to the active site of HisF. This Geobacillus kaustophilus (strain HTA426) protein is Imidazole glycerol phosphate synthase subunit HisH.